The primary structure comprises 388 residues: Coproporphyrin III ferrochelatase (388 aa).

Fe-coproporphyrin III contacts are provided by serine 59 and tyrosine 124. The Fe(2+) site is built by histidine 186 and glutamate 276. Residues 349–369 (QSPQHASRAVTDAAATGRRGD) form a disordered region.

It belongs to the ferrochelatase family.

It localises to the cytoplasm. It carries out the reaction Fe-coproporphyrin III + 2 H(+) = coproporphyrin III + Fe(2+). It participates in porphyrin-containing compound metabolism; protoheme biosynthesis. Functionally, involved in coproporphyrin-dependent heme b biosynthesis. Catalyzes the insertion of ferrous iron into coproporphyrin III to form Fe-coproporphyrin III. The chain is Coproporphyrin III ferrochelatase from Frankia alni (strain DSM 45986 / CECT 9034 / ACN14a).